The following is a 229-amino-acid chain: Orotidine 5'-phosphate decarboxylase (229 aa).

Residues D10, K32, 59–68 (DLKFHDIPNT), T119, R180, Q189, G209, and R210 contribute to the substrate site. The active-site Proton donor is the K61.

The protein belongs to the OMP decarboxylase family. Type 1 subfamily. In terms of assembly, homodimer.

It catalyses the reaction orotidine 5'-phosphate + H(+) = UMP + CO2. The protein operates within pyrimidine metabolism; UMP biosynthesis via de novo pathway; UMP from orotate: step 2/2. In terms of biological role, catalyzes the decarboxylation of orotidine 5'-monophosphate (OMP) to uridine 5'-monophosphate (UMP). The protein is Orotidine 5'-phosphate decarboxylase of Legionella pneumophila subsp. pneumophila (strain Philadelphia 1 / ATCC 33152 / DSM 7513).